The following is an 82-amino-acid chain: Small ribosomal subunit protein eS27A (82 aa).

The C4-type zinc-finger motif lies at 37 to 59 (CPGCLNITTVFSHAQTAVTCESC). Cys40 is subject to S-methylcysteine.

Belongs to the eukaryotic ribosomal protein eS27 family. In terms of assembly, component of the small ribosomal subunit (SSU). Mature yeast ribosomes consist of a small (40S) and a large (60S) subunit. The 40S small subunit contains 1 molecule of ribosomal RNA (18S rRNA) and 33 different proteins (encoded by 57 genes). The large 60S subunit contains 3 rRNA molecules (25S, 5.8S and 5S rRNA) and 46 different proteins (encoded by 81 genes). Zn(2+) serves as cofactor. Post-translationally, the N-terminus is not modified.

It is found in the cytoplasm. Its function is as follows. Component of the ribosome, a large ribonucleoprotein complex responsible for the synthesis of proteins in the cell. The small ribosomal subunit (SSU) binds messenger RNAs (mRNAs) and translates the encoded message by selecting cognate aminoacyl-transfer RNA (tRNA) molecules. The large subunit (LSU) contains the ribosomal catalytic site termed the peptidyl transferase center (PTC), which catalyzes the formation of peptide bonds, thereby polymerizing the amino acids delivered by tRNAs into a polypeptide chain. The nascent polypeptides leave the ribosome through a tunnel in the LSU and interact with protein factors that function in enzymatic processing, targeting, and the membrane insertion of nascent chains at the exit of the ribosomal tunnel. This Saccharomyces cerevisiae (strain ATCC 204508 / S288c) (Baker's yeast) protein is Small ribosomal subunit protein eS27A.